The chain runs to 934 residues: AP-2 complex subunit alpha (934 aa).

Residues Arg623–Thr670 are disordered. Over residues Pro636–His645 the composition is skewed to polar residues. The span at Ser646–Ser663 shows a compositional bias: low complexity.

The protein belongs to the adapter complexes large subunit family. As to quaternary structure, adaptor protein complex 2 (AP-2) is a heterotetramer composed of two large adaptins (alpha-type and beta-type subunits), a medium adaptin (mu-type subunit AP50) and a small adaptin (sigma-type subunit AP17).

It localises to the cell membrane. Its subcellular location is the membrane. The protein localises to the coated pit. Adaptins are components of the adapter complexes which link clathrin to receptors in coated vesicles. Clathrin-associated protein complexes are believed to interact with the cytoplasmic tails of membrane proteins, leading to their selection and concentration. Alpha adaptin is a subunit of the plasma membrane adapter. In Anopheles gambiae (African malaria mosquito), this protein is AP-2 complex subunit alpha.